We begin with the raw amino-acid sequence, 389 residues long: Phosphopentomutase (389 aa).

6 residues coordinate Mn(2+): D12, D284, H289, D325, H326, and H337.

It belongs to the phosphopentomutase family. It depends on Mn(2+) as a cofactor.

It is found in the cytoplasm. The catalysed reaction is 2-deoxy-alpha-D-ribose 1-phosphate = 2-deoxy-D-ribose 5-phosphate. It carries out the reaction alpha-D-ribose 1-phosphate = D-ribose 5-phosphate. It participates in carbohydrate degradation; 2-deoxy-D-ribose 1-phosphate degradation; D-glyceraldehyde 3-phosphate and acetaldehyde from 2-deoxy-alpha-D-ribose 1-phosphate: step 1/2. Isomerase that catalyzes the conversion of deoxy-ribose 1-phosphate (dRib-1-P) and ribose 1-phosphate (Rib-1-P) to deoxy-ribose 5-phosphate (dRib-5-P) and ribose 5-phosphate (Rib-5-P), respectively. This chain is Phosphopentomutase, found in Anaeromyxobacter sp. (strain Fw109-5).